Reading from the N-terminus, the 309-residue chain is Succinate--CoA ligase [ADP-forming] subunit alpha-2, mitochondrial (309 aa).

Residues 1-9 constitute a hydrogenosome transit peptide; sequence MLSSSFERN. CoA-binding positions include Lys54 and 107–109; that span reads ITE. Tyr171 contacts substrate. His262 serves as the catalytic Tele-phosphohistidine intermediate.

It belongs to the succinate/malate CoA ligase alpha subunit family. Heterodimer of an alpha and a beta subunit.

The protein resides in the hydrogenosome lumen. It catalyses the reaction succinate + ATP + CoA = succinyl-CoA + ADP + phosphate. Its pathway is carbohydrate metabolism; tricarboxylic acid cycle; succinate from succinyl-CoA (ligase route): step 1/1. Succinyl-CoA synthetase functions in the citric acid cycle (TCA), coupling the hydrolysis of succinyl-CoA to the synthesis of ATP and thus represents the only step of substrate-level phosphorylation in the TCA. The alpha subunit of the enzyme binds the substrates coenzyme A and phosphate, while succinate binding and nucleotide specificity is provided by the beta subunit. The polypeptide is Succinate--CoA ligase [ADP-forming] subunit alpha-2, mitochondrial (ALPHA-SCS2) (Trichomonas vaginalis).